The sequence spans 348 residues: Rhodopsin (348 aa).

M1 carries the post-translational modification N-acetylmethionine. Residues 1-36 (MNGTEGPNFYVPFSNATGVVRSPFEYPQYYLAEPWQ) are Extracellular-facing. 2 N-linked (GlcNAc...) asparagine glycosylation sites follow: N2 and N15. Residues 37–61 (FSMLAAYMFLLIVLGFPINFLTLYV) form a helical membrane-spanning segment. At 62–73 (TVQHKKLRTPLN) the chain is on the cytoplasmic side. A helical transmembrane segment spans residues 74-96 (YILLNLAVADLFMVFGGFTTTLY). At 97–110 (TSLHGYFVFGPTGC) the chain is on the extracellular side. Cysteines 110 and 187 form a disulfide. A helical membrane pass occupies residues 111–133 (NAEGFFATLGGEIALWSLVVLAI). The 'Ionic lock' involved in activated form stabilization motif lies at 134 to 136 (ERY). Residues 134 to 152 (ERYVVVCKPMSNFRFGENH) lie on the Cytoplasmic side of the membrane. The helical transmembrane segment at 153–173 (AIMGVAFTWVMALACAAPPLF) threads the bilayer. The Extracellular segment spans residues 174–202 (GWSRYIPEGLQCSCGIDYYTLKPEVNNES). E201 provides a ligand contact to Zn(2+). A helical transmembrane segment spans residues 203 to 224 (FVIYMFVVHFTIPMIVIFFCYG). Residues 225-252 (QLVFTVKEARAQQQESATTQKAEKEVTR) lie on the Cytoplasmic side of the membrane. Residues 253–274 (MVIIMVIAFLICWVPYASVAFY) form a helical membrane-spanning segment. Residues 275–286 (IFTHQGSNFGPI) lie on the Extracellular side of the membrane. Q279 lines the Zn(2+) pocket. Residues 287–308 (FMTIPAFFAKSASIYNPVIYIM) traverse the membrane as a helical segment. The residue at position 296 (K296) is an N6-(retinylidene)lysine. Topologically, residues 309–348 (MNKQFRNCMLTTICCGKNPLGDDEASATVSKTETSQVAPA) are cytoplasmic. S-palmitoyl cysteine attachment occurs at residues C322 and C323. Residues 330–348 (DDEASATVSKTETSQVAPA) form an interaction with SAG region. S334 carries the phosphoserine modification. The residue at position 336 (T336) is a Phosphothreonine. Residue S338 is modified to Phosphoserine. T340 and T342 each carry phosphothreonine. A Phosphoserine modification is found at S343.

This sequence belongs to the G-protein coupled receptor 1 family. Opsin subfamily. Homodimer. May form a complex composed of RHO, GRK1 and RCVRN in a Ca(2+)-dependent manner; RCVRN prevents the interaction between GRK1 and RHO. Interacts with GRK1. Interacts (phosphorylated form) with SAG. Interacts with GNAT1. Interacts with GNAT3. SAG and G-proteins compete for a common binding site. Interacts with PRCD; the interaction promotes PRCD stability. Forms a complex with ASAP1 and ARF4. Forms a complex with ASAP1, RAB11A, Rabin8/RAB3IP, ARF4 and RAB11FIP3; the complex regulates Golgi-to-cilia rhodopsin/RHO transport in photoreceptors. Post-translationally, phosphorylated on some or all of the serine and threonine residues present in the C-terminal region. In terms of processing, contains one covalently linked retinal chromophore. Upon light absorption, the covalently bound 11-cis-retinal is converted to all-trans-retinal. After hydrolysis of the Schiff base and release of the covalently bound all-trans-retinal, active rhodopsin is regenerated by binding of a fresh molecule of 11-cis-retinal.

Its subcellular location is the membrane. It is found in the cell projection. The protein localises to the cilium. The protein resides in the photoreceptor outer segment. Functionally, photoreceptor required for image-forming vision at low light intensity. Required for photoreceptor cell viability after birth. Light-induced isomerization of 11-cis to all-trans retinal triggers a conformational change that activates signaling via G-proteins. Subsequent receptor phosphorylation mediates displacement of the bound G-protein alpha subunit by the arrestin SAG and terminates signaling. This is Rhodopsin (RHO) from Macaca fascicularis (Crab-eating macaque).